The following is a 1478-amino-acid chain: Bud site selection protein 3 homolog (1478 aa).

Disordered regions lie at residues 732–889, 1085–1106, and 1146–1168; these read KSKC…PSKG, QRDS…HSSN, and YSHS…VSAP. The span at 749–761 shows a compositional bias: polar residues; sequence LVSTNDNSRTLSP. Residues 763–777 are compositionally biased toward low complexity; the sequence is TIISRTPRTISTITP. The span at 786 to 800 shows a compositional bias: polar residues; sequence GQASNSPARGSISTT. Positions 1146-1160 are enriched in basic and acidic residues; sequence YSHSHDEEIDSEKRA.

The protein belongs to the BUD3 family.

Its subcellular location is the cell tip. The protein resides in the cell septum. In terms of biological role, required for proper septum positioning and septum construction during septation. Acts as a landmark to mark sites for future septation, and as part of a scaffold that recruits components of the contractile ring to the site of septation. Not required to determine the site of lateral branch formation. The sequence is that of Bud site selection protein 3 homolog (BUD3) from Eremothecium gossypii (strain ATCC 10895 / CBS 109.51 / FGSC 9923 / NRRL Y-1056) (Yeast).